The primary structure comprises 205 residues: Protein GrpE (205 aa).

Residues 1–18 (MSEEVKNSVETEENKASK) show a composition bias toward basic and acidic residues. Residues 1 to 60 (MSEEVKNSVETEENKASKDNATQAPNPTENHNTAQETEKAENSEKTESATQENESLDKLK) form a disordered region. Positions 19–35 (DNATQAPNPTENHNTAQ) are enriched in polar residues. Basic and acidic residues predominate over residues 36 to 47 (ETEKAENSEKTE).

This sequence belongs to the GrpE family. As to quaternary structure, homodimer.

It is found in the cytoplasm. Its function is as follows. Participates actively in the response to hyperosmotic and heat shock by preventing the aggregation of stress-denatured proteins, in association with DnaK and GrpE. It is the nucleotide exchange factor for DnaK and may function as a thermosensor. Unfolded proteins bind initially to DnaJ; upon interaction with the DnaJ-bound protein, DnaK hydrolyzes its bound ATP, resulting in the formation of a stable complex. GrpE releases ADP from DnaK; ATP binding to DnaK triggers the release of the substrate protein, thus completing the reaction cycle. Several rounds of ATP-dependent interactions between DnaJ, DnaK and GrpE are required for fully efficient folding. The sequence is that of Protein GrpE from Chloroherpeton thalassium (strain ATCC 35110 / GB-78).